A 462-amino-acid polypeptide reads, in one-letter code: MTRQNENYNRYLLSDWRPENPAFWENKGKGIARRNLWISVSCLLLAFCVWMLFSAVAVNLNKIGFNFTTDQLFLLTALPSLSGAILRVPYSFMVPLFGGRKWTVLSTVILIIPCAWLGFAVQNPATPFGVFMLIALLCGFAGANFASSMGNISFFFPKARQGSALGINGGLGNLGVSVMQLIAPLVIFLPIFTFLGVQGVPQPDGSLLALTNAAWIWVPLLAVATLAAWFGMNDIGSSKASVASQLPVLKRLHLWLLSLLYLATFGSFIGFSAGFAMLAKTQFPDVNILQLAFFGPFIGALARSAGGVISDKFGGVRVTLINFIFMALFTALLFLTLPGSGAGSFSAFYLVFMGLFLTAGLGSGSTFQMIAVIFRQITLYNVKLRGGSDEQAQREAVTDTAAALGFISAIGAVGGFFIPKAFGTSLALTGSPVGAMKIFLLFYLACVLLTWLVYGRRKPKQQ.

At 1–35 (MTRQNENYNRYLLSDWRPENPAFWENKGKGIARRN) the chain is on the cytoplasmic side. A helical membrane pass occupies residues 36–56 (LWISVSCLLLAFCVWMLFSAV). Residues 57 to 71 (AVNLNKIGFNFTTDQ) are Periplasmic-facing. Residues 72-92 (LFLLTALPSLSGAILRVPYSF) traverse the membrane as a helical segment. Topologically, residues 93–101 (MVPLFGGRK) are cytoplasmic. Residues 102 to 122 (WTVLSTVILIIPCAWLGFAVQ) traverse the membrane as a helical segment. The Periplasmic segment spans residues 123 to 124 (NP). Residues 125 to 145 (ATPFGVFMLIALLCGFAGANF) form a helical membrane-spanning segment. Over 146–180 (ASSMGNISFFFPKARQGSALGINGGLGNLGVSVMQ) the chain is Cytoplasmic. The chain crosses the membrane as a helical span at residues 181–201 (LIAPLVIFLPIFTFLGVQGVP). Residues 202-206 (QPDGS) lie on the Periplasmic side of the membrane. Residues 207 to 227 (LLALTNAAWIWVPLLAVATLA) form a helical membrane-spanning segment. The Cytoplasmic portion of the chain corresponds to 228–258 (AWFGMNDIGSSKASVASQLPVLKRLHLWLLS). The chain crosses the membrane as a helical span at residues 259-279 (LLYLATFGSFIGFSAGFAMLA). Residues 280–287 (KTQFPDVN) are Periplasmic-facing. Residues 288–308 (ILQLAFFGPFIGALARSAGGV) form a helical membrane-spanning segment. Residues 309 to 317 (ISDKFGGVR) lie on the Cytoplasmic side of the membrane. Residues 318-338 (VTLINFIFMALFTALLFLTLP) form a helical membrane-spanning segment. The Periplasmic segment spans residues 339 to 341 (GSG). The chain crosses the membrane as a helical span at residues 342–362 (AGSFSAFYLVFMGLFLTAGLG). Residues 363–401 (SGSTFQMIAVIFRQITLYNVKLRGGSDEQAQREAVTDTA) are Cytoplasmic-facing. The chain crosses the membrane as a helical span at residues 402–422 (AALGFISAIGAVGGFFIPKAF). Topologically, residues 423-432 (GTSLALTGSP) are periplasmic. Residues 433–453 (VGAMKIFLLFYLACVLLTWLV) traverse the membrane as a helical segment. Over 454-462 (YGRRKPKQQ) the chain is Cytoplasmic.

This sequence belongs to the major facilitator superfamily. Nitrate/nitrite porter (TC 2.A.1.8) family.

Its subcellular location is the cell inner membrane. Functionally, catalyzes nitrate uptake, nitrite uptake and nitrite export across the cytoplasmic membrane. The protein is Nitrate/nitrite transporter NarU (narU) of Salmonella typhimurium (strain LT2 / SGSC1412 / ATCC 700720).